The sequence spans 702 residues: Epsin-1 (702 aa).

In terms of domain architecture, ENTH spans 10–142 (NFSKGYTDTQ…EDEHALKEAR (133 aa)). Composition is skewed to basic and acidic residues over residues 136 to 160 (HALK…SSRF) and 183 to 192 (SRYDDDDRDH). The interval 136-285 (HALKEARGDS…HQREREQQEQ (150 aa)) is disordered. Over residues 193–214 (RSRRRSRSRRPGRSRSRRRSRR) the composition is skewed to basic residues. 4 positions are modified to phosphoserine: S212, S216, S218, and S223. 2 consecutive UIM domains span residues 226 to 245 (ENDP…AEED) and 254 to 273 (DSEA…DEAR). Over residues 230 to 248 (ELQRVIEESKRQAEEDAKR) the composition is skewed to basic and acidic residues. A Phosphoserine modification is found at S255. Residues 266 to 283 (SKEEDEARQRHQREREQQ) show a composition bias toward basic and acidic residues. Position 406 is a phosphothreonine (T406). Disordered stretches follow at residues 504–589 (NHTG…RTGD) and 683–702 (PMQG…LIDL). The segment covering 514–534 (TGLQRQTTGYTGNNNPYSRPL) has biased composition (polar residues). The span at 535 to 549 (QSQSTGILQQQQQQS) shows a compositional bias: low complexity. Residues 557–577 (KTGSNNPFAQFSNLPSQSTAP) are compositionally biased toward polar residues. Residues 683–695 (PMQGMQQQSMQPQ) are compositionally biased toward low complexity.

The protein belongs to the epsin family.

The protein resides in the cytoplasm. Its subcellular location is the membrane. Functionally, binds to membranes enriched in phosphatidylinositol 3,5-bisphosphate (PtdIns(3,5)P2) and phosphatidylinositol 4,5-bisphosphate (PtdIns(4,5)P2). Required for endocytosis and localization of actin. The polypeptide is Epsin-1 (ent1) (Schizosaccharomyces pombe (strain 972 / ATCC 24843) (Fission yeast)).